We begin with the raw amino-acid sequence, 70 residues long: Probable non-specific lipid-transfer protein 2 (70 aa).

Cystine bridges form between Cys4–Cys38, Cys12–Cys26, Cys27–Cys62, and Cys36–Cys69.

Functionally, potential phospholipid transfer protein. This chain is Probable non-specific lipid-transfer protein 2, found in Zea mays (Maize).